Consider the following 20-residue polypeptide: Apidaecin 3+ (20 aa).

The interval 1–20 is disordered; sequence GKPSRPRPAPIQPRPPHPRL.

This sequence belongs to the apidaecin family.

The protein localises to the secreted. Antimicrobial peptide active against many Gram-negative enterobacterial and plant-associated bacterial species. Not active against other bacterial species like H.pylori, P.mirabilis, B.pertussis or N.gonorrhoeae. Functionally, among others, also active against S.typhi. Its function is as follows. Not active against S.typhi. The chain is Apidaecin 3+ from Pimpla disparis (Parasitic wasp).